The chain runs to 310 residues: Aspartate carbamoyltransferase catalytic subunit (310 aa).

The carbamoyl phosphate site is built by R54 and T55. K84 contributes to the L-aspartate binding site. Residues R105, H134, and Q137 each coordinate carbamoyl phosphate. L-aspartate is bound by residues R167 and R229. Carbamoyl phosphate contacts are provided by L267 and P268.

This sequence belongs to the aspartate/ornithine carbamoyltransferase superfamily. ATCase family. Heterododecamer (2C3:3R2) of six catalytic PyrB chains organized as two trimers (C3), and six regulatory PyrI chains organized as three dimers (R2).

It carries out the reaction carbamoyl phosphate + L-aspartate = N-carbamoyl-L-aspartate + phosphate + H(+). The protein operates within pyrimidine metabolism; UMP biosynthesis via de novo pathway; (S)-dihydroorotate from bicarbonate: step 2/3. Catalyzes the condensation of carbamoyl phosphate and aspartate to form carbamoyl aspartate and inorganic phosphate, the committed step in the de novo pyrimidine nucleotide biosynthesis pathway. In Enterobacter sp. (strain 638), this protein is Aspartate carbamoyltransferase catalytic subunit.